The primary structure comprises 481 residues: Alkaline protease secretion protein AprF (481 aa).

Positions 462-481 (PAPLHTLSKTDTEENRSALN) are disordered. Positions 469 to 481 (SKTDTEENRSALN) are enriched in basic and acidic residues.

It belongs to the outer membrane factor (OMF) (TC 1.B.17) family.

The protein localises to the cell outer membrane. In terms of biological role, involved in the secretion of alkaline protease. The protein is Alkaline protease secretion protein AprF (aprF) of Pseudomonas aeruginosa (strain ATCC 15692 / DSM 22644 / CIP 104116 / JCM 14847 / LMG 12228 / 1C / PRS 101 / PAO1).